A 596-amino-acid chain; its full sequence is Inactive metallocarboxypeptidase ecm14 (596 aa).

An N-terminal signal peptide occupies residues 1–26 (MSQSHSILSSLILLVAIIFCVPHVIA). Residues 27–190 (VPWTTDGHAQ…SYPSMAYADA (164 aa)) constitute a propeptide that is removed on maturation. N-linked (GlcNAc...) asparagine glycosylation occurs at Asn-114. Residues 220-540 (NYQPLSVIIP…NVIKYFGDFL (321 aa)) enclose the Peptidase M14 domain. 2 residues coordinate Zn(2+): His-285 and Glu-288. Substrate is bound by residues 285–288 (HARE), Arg-343, and 360–361 (DR). An intrachain disulfide couples Cys-354 to Cys-376. Asn-400 carries N-linked (GlcNAc...) asparagine glycosylation. His-416 lines the Zn(2+) pocket. 417–418 (SY) is a substrate binding site.

This sequence belongs to the peptidase M14 family. Requires Zn(2+) as cofactor.

The protein localises to the vacuole. Its subcellular location is the secreted. Its function is as follows. Inactive carboxypeptidase that may play a role in cell wall organization and biogenesis. The protein is Inactive metallocarboxypeptidase ecm14 (ecm14) of Sclerotinia sclerotiorum (strain ATCC 18683 / 1980 / Ss-1) (White mold).